A 149-amino-acid polypeptide reads, in one-letter code: D-aminoacyl-tRNA deacylase (149 aa).

Positions 137–138 match the Gly-cisPro motif, important for rejection of L-amino acids motif; it reads GP.

The protein belongs to the DTD family. In terms of assembly, homodimer.

It localises to the cytoplasm. It carries out the reaction glycyl-tRNA(Ala) + H2O = tRNA(Ala) + glycine + H(+). The catalysed reaction is a D-aminoacyl-tRNA + H2O = a tRNA + a D-alpha-amino acid + H(+). Functionally, an aminoacyl-tRNA editing enzyme that deacylates mischarged D-aminoacyl-tRNAs. Also deacylates mischarged glycyl-tRNA(Ala), protecting cells against glycine mischarging by AlaRS. Acts via tRNA-based rather than protein-based catalysis; rejects L-amino acids rather than detecting D-amino acids in the active site. By recycling D-aminoacyl-tRNA to D-amino acids and free tRNA molecules, this enzyme counteracts the toxicity associated with the formation of D-aminoacyl-tRNA entities in vivo and helps enforce protein L-homochirality. The polypeptide is D-aminoacyl-tRNA deacylase (Clostridium novyi (strain NT)).